Here is a 93-residue protein sequence, read N- to C-terminus: Small ribosomal subunit protein uS19 (93 aa).

This sequence belongs to the universal ribosomal protein uS19 family.

Its function is as follows. Protein S19 forms a complex with S13 that binds strongly to the 16S ribosomal RNA. The polypeptide is Small ribosomal subunit protein uS19 (Rubrobacter xylanophilus (strain DSM 9941 / JCM 11954 / NBRC 16129 / PRD-1)).